The primary structure comprises 934 residues: MTRHLTLCFILLVMLIDKSEACFCDHYPWTHWSSCSKSCNSGTQSRQRQVVVNDYYWKNLCDKLCIKQETRECNLQTCPINCVLGDYGTWSDCDPCTEKQVKVKSVLRPSQFGGQPCTEPLVTFQPCVPSKLCKIEETNCKNKFLCDSGRCIPSKLECNGENDCGDNSDERNCGRTKPVCTRIYTPIPSVQLMGTGFHFLAGEPRGEVLDNSFTGGICKLVKTSRASNPYRVSANLENVNFEVQTIEDDLKTEFYKNLISFEKNKNEDSLSVDERTKFFPIPIFHFSEKNEHSHYSSAFNKVIKASHKKDSSFIRIHKLIKVLNFTMKATDLQLSDVFLKALVHLPLEYNSAVYSRIFDDFGTHYFTSGSLGGKYDLIYQFSRQELQNSGLTEEEAQNCVQYETKKLKFLYMEIHKEDTCTKNKLSEKYGGSFLQGSEKSISLVQGGRSQQAAALAWEKGTSGPEENVYSEWLESVKENPAVVDYKLAPITDLVRNIPCAVTKRNNLRRALQEYAAKFDPCQCAPCPNNGRPRLSGTECLCVCQSGTYGENCERRSPGYKSDAVDGNWGCWSSWSACNAAYRRSRTRECNNPAPQRGGQSCGGKDQQEEDCTVSIMENVGQPCINDDEEMKEVDLAEPEAESGCSQPPLPENAFTWNEKKLYSVGEEVEISCLTGFTAVGFQYLRCLPDRTWSQGDVECQRTSCLKPVVQDVLTISPFQRVYQIGESIELTCPRGFVVAGPSRYTCKEDSWTPPISNSLTCEQAILTKSKDLCPPGQKQSGSKCICMSPEEDCSAYSEDLCIFDGGSSQYFTSSACKFLAGKCLNNTQSHFVHSGSCQEGLQLEWGLERLKLAVNSTKRVSCGYNTCYDWENCSAHTSNCVCLLPPQCSKDENQLYCVKIGSSMREKTVNICTLGAVRCANIKVEILNPGRCPD.

A signal peptide spans Met1–Ala21. 11 cysteine pairs are disulfide-bonded: Cys22/Cys61, Cys24/Cys65, Cys35/Cys73, Cys39/Cys78, Cys82/Cys117, Cys93/Cys127, Cys96/Cys133, Cys140/Cys151, Cys146/Cys164, Cys158/Cys173, and Cys180/Cys218. 2 consecutive TSP type-1 domains span residues Cys22 to Pro79 and Asn81 to Lys134. The LDL-receptor class A domain maps to Thr138–Arg175. Leu156, Asn159, Glu161, Asp163, Asp169, and Glu170 together coordinate Ca(2+). Positions Thr176–Gln522 constitute an MACPF domain. The beta stranded transmembrane segment at Phe278 to Asn290 threads the bilayer. Asn324 is a glycosylation site (N-linked (GlcNAc...) asparagine). Intrachain disulfides connect Cys399–Cys420, Cys499–Cys623, Cys521–Cys570, Cys523–Cys539, Cys526–Cys541, Cys543–Cys552, Cys577–Cys611, Cys589–Cys601, Cys644–Cys686, Cys672–Cys699, Cys704–Cys746, Cys732–Cys761, Cys773–Cys823, Cys784–Cys801, Cys786–Cys837, and Cys793–Cys816. Residues Tyr402–His415 form a beta stranded membrane-spanning segment. One can recognise an EGF-like domain in the interval Cys523–Glu553. One can recognise a TSP type-1 3 domain in the interval Asp565 to Thr612. CCP stretches follow at residues Cys611–Pro688 and Asp689–Ile765. 2 consecutive Sushi domains span residues Ser642–Arg701 and Thr702–Gln763. A C5b-binding domain region spans residues Ser642–Asp934. The interval Leu766–Gly840 is factor I module (FIM) 1. Residues Ile785–Glu839 enclose the Kazal-like 1 domain. Asn825, Asn855, and Asn872 each carry an N-linked (GlcNAc...) asparagine glycan. Positions Lys858 to Asp934 are factor I module (FIM) 2. 5 cysteine pairs are disulfide-bonded: Cys862/Cys873, Cys867/Cys919, Cys880/Cys897, Cys882/Cys932, and Cys888/Cys912. The region spanning His876–Asp934 is the Kazal-like 2 domain.

Belongs to the complement C6/C7/C8/C9 family. As to quaternary structure, component of the membrane attack complex (MAC), composed of complement C5b, C6, C7, C8A, C8B, C8G and multiple copies of the pore-forming subunit C9. In terms of processing, all cysteine residues are assumed to be cross-linked to one another. Individual modules containing an even number of conserved cysteine residues are supposed to have disulfide linkages only within the same module.

The protein resides in the secreted. It localises to the target cell membrane. With respect to regulation, membrane attack complex (MAC) assembly is inhibited by CD59, thereby protecting self-cells from damage during complement activation. MAC assembly is also inhibited by clusterin (CLU) chaperones that inhibit polymerization of C9. Component of the membrane attack complex (MAC), a multiprotein complex activated by the complement cascade, which inserts into a target cell membrane and forms a pore, leading to target cell membrane rupture and cell lysis. The MAC is initiated by proteolytic cleavage of C5 into complement C5b in response to the classical, alternative, lectin and GZMK complement pathways. The complement pathways consist in a cascade of proteins that leads to phagocytosis and breakdown of pathogens and signaling that strengthens the adaptive immune system. Together with component C5b, involved in MAC complex assembly: complement C5b and C6 associate with the outer leaflet of target cell membrane, reducing the energy for membrane bending. The protein is Complement component C6 of Mus musculus (Mouse).